Here is a 101-residue protein sequence, read N- to C-terminus: Protein PrgJ (101 aa).

To S.flexneri MxiI.

In terms of biological role, required for invasion of epithelial cells. The protein is Protein PrgJ (prgJ) of Salmonella typhimurium (strain LT2 / SGSC1412 / ATCC 700720).